We begin with the raw amino-acid sequence, 352 residues long: Zinc transporter 1 (352 aa).

A signal peptide spans 1 to 29 (MARTMTMRVSSLLVAVVLLAALSFQACSG). The Extracellular portion of the chain corresponds to 30-56 (HGGINDGDGQVDAPATPASSSGVRSKG). The chain crosses the membrane as a helical span at residues 57–77 (LIAVKVWCLVILLVFTFAGGV). Over 78–87 (SPYFYRWNES) the chain is Cytoplasmic. Residues 88 to 108 (FLLLGTQFAAGVFLGTALMHF) traverse the membrane as a helical segment. The Extracellular portion of the chain corresponds to 109–127 (LADSTSTFKGLTTNQYPFS). A helical transmembrane segment spans residues 128-148 (FMLTCVGFLLTMLSDLVIAAV). Over 149–200 (ARRSAAAGVSDNQVSEQQQRQQAEGAVMSRKEEEAAAVAHPAMLVRTSSFED) the chain is Cytoplasmic. Residues 201 to 221 (AVLLIVALCFHSVFEGIAIGV) form a helical membrane-spanning segment. Over 222–230 (SASKSEAWR) the chain is Extracellular. Residues 231 to 251 (NLWTIGLHKIFAAVAMGIALL) traverse the membrane as a helical segment. The Cytoplasmic portion of the chain corresponds to 252 to 262 (RMIPKRPFLMT). A helical membrane pass occupies residues 263–283 (VVYSLAFAVSSPVGVGIGIAI). Over 284-296 (DATSQGRAADWTY) the chain is Extracellular. A helical membrane pass occupies residues 297–317 (AISMGLATGVFIYVAINHLIA). At 318 to 330 (KGYRPHHPTAADK) the chain is on the cytoplasmic side. A helical transmembrane segment spans residues 331-351 (PLFKFLAVLLGVAVMAVVMIW). Residue aspartate 352 is a topological domain, extracellular.

It belongs to the ZIP transporter (TC 2.A.5) family. In terms of tissue distribution, expressed in vascular bundles of roots and leaves.

It is found in the cell membrane. In terms of biological role, zinc transporter that may mediate zinc uptake from the rhizosphere. May also transport other divalent cations. The polypeptide is Zinc transporter 1 (ZIP1) (Oryza sativa subsp. japonica (Rice)).